The chain runs to 253 residues: 2-succinyl-6-hydroxy-2,4-cyclohexadiene-1-carboxylate synthase (253 aa).

Positions 11-147 constitute an AB hydrolase-1 domain; that stretch reads PWLVCLHGLF…PEALQDWYQQ (137 aa).

Belongs to the AB hydrolase superfamily. MenH family. Monomer.

It carries out the reaction 5-enolpyruvoyl-6-hydroxy-2-succinyl-cyclohex-3-ene-1-carboxylate = (1R,6R)-6-hydroxy-2-succinyl-cyclohexa-2,4-diene-1-carboxylate + pyruvate. The protein operates within quinol/quinone metabolism; 1,4-dihydroxy-2-naphthoate biosynthesis; 1,4-dihydroxy-2-naphthoate from chorismate: step 3/7. It functions in the pathway quinol/quinone metabolism; menaquinone biosynthesis. Its function is as follows. Catalyzes a proton abstraction reaction that results in 2,5-elimination of pyruvate from 2-succinyl-5-enolpyruvyl-6-hydroxy-3-cyclohexene-1-carboxylate (SEPHCHC) and the formation of 2-succinyl-6-hydroxy-2,4-cyclohexadiene-1-carboxylate (SHCHC). This is 2-succinyl-6-hydroxy-2,4-cyclohexadiene-1-carboxylate synthase from Pectobacterium atrosepticum (strain SCRI 1043 / ATCC BAA-672) (Erwinia carotovora subsp. atroseptica).